A 173-amino-acid chain; its full sequence is NADH-ubiquinone oxidoreductase chain 6 (173 aa).

The next 5 membrane-spanning stretches (helical) occupy residues 1–21 (MTYF…AVAS), 27–47 (YGVL…LSLG), 48–68 (VSFI…VVFV), 87–107 (VVIY…VGDF), and 139–159 (WGAG…FVVL).

It belongs to the complex I subunit 6 family.

It is found in the mitochondrion membrane. It catalyses the reaction a ubiquinone + NADH + 5 H(+)(in) = a ubiquinol + NAD(+) + 4 H(+)(out). Core subunit of the mitochondrial membrane respiratory chain NADH dehydrogenase (Complex I) that is believed to belong to the minimal assembly required for catalysis. Complex I functions in the transfer of electrons from NADH to the respiratory chain. The immediate electron acceptor for the enzyme is believed to be ubiquinone. The sequence is that of NADH-ubiquinone oxidoreductase chain 6 (MT-ND6) from Struthio camelus (Common ostrich).